A 230-amino-acid polypeptide reads, in one-letter code: Probable methylthioribulose-1-phosphate dehydratase (230 aa).

Cys-87 is a binding site for substrate. The Zn(2+) site is built by His-105 and His-107. Residue Glu-129 is the Proton donor/acceptor of the active site. Zn(2+) is bound at residue His-185.

The protein belongs to the aldolase class II family. MtnB subfamily. It depends on Zn(2+) as a cofactor.

The protein resides in the cytoplasm. It catalyses the reaction 5-(methylsulfanyl)-D-ribulose 1-phosphate = 5-methylsulfanyl-2,3-dioxopentyl phosphate + H2O. It participates in amino-acid biosynthesis; L-methionine biosynthesis via salvage pathway; L-methionine from S-methyl-5-thio-alpha-D-ribose 1-phosphate: step 2/6. In terms of biological role, catalyzes the dehydration of methylthioribulose-1-phosphate (MTRu-1-P) into 2,3-diketo-5-methylthiopentyl-1-phosphate (DK-MTP-1-P). The protein is Probable methylthioribulose-1-phosphate dehydratase of Drosophila pseudoobscura pseudoobscura (Fruit fly).